We begin with the raw amino-acid sequence, 333 residues long: Beta-ketoacyl-[acyl-carrier-protein] synthase III (333 aa).

Catalysis depends on residues Cys-112 and His-255. The interval 256–260 (QANQR) is ACP-binding. Residue Asn-285 is part of the active site.

Belongs to the thiolase-like superfamily. FabH family. As to quaternary structure, homodimer.

It is found in the cytoplasm. The catalysed reaction is malonyl-[ACP] + acetyl-CoA + H(+) = 3-oxobutanoyl-[ACP] + CO2 + CoA. It functions in the pathway lipid metabolism; fatty acid biosynthesis. Its function is as follows. Catalyzes the condensation reaction of fatty acid synthesis by the addition to an acyl acceptor of two carbons from malonyl-ACP. Catalyzes the first condensation reaction which initiates fatty acid synthesis and may therefore play a role in governing the total rate of fatty acid production. Possesses both acetoacetyl-ACP synthase and acetyl transacylase activities. Its substrate specificity determines the biosynthesis of branched-chain and/or straight-chain of fatty acids. In Synechococcus sp. (strain RCC307), this protein is Beta-ketoacyl-[acyl-carrier-protein] synthase III.